We begin with the raw amino-acid sequence, 287 residues long: ATP synthase gamma chain (287 aa).

This sequence belongs to the ATPase gamma chain family. F-type ATPases have 2 components, CF(1) - the catalytic core - and CF(0) - the membrane proton channel. CF(1) has five subunits: alpha(3), beta(3), gamma(1), delta(1), epsilon(1). CF(0) has three main subunits: a, b and c.

Its subcellular location is the cell inner membrane. Functionally, produces ATP from ADP in the presence of a proton gradient across the membrane. The gamma chain is believed to be important in regulating ATPase activity and the flow of protons through the CF(0) complex. This is ATP synthase gamma chain from Alkalilimnicola ehrlichii (strain ATCC BAA-1101 / DSM 17681 / MLHE-1).